The chain runs to 910 residues: Aconitate hydratase A (910 aa).

Residues C454, C520, and C523 each coordinate [4Fe-4S] cluster.

The protein belongs to the aconitase/IPM isomerase family. As to quaternary structure, monomer. [4Fe-4S] cluster serves as cofactor.

It carries out the reaction citrate = D-threo-isocitrate. The catalysed reaction is (2S,3R)-3-hydroxybutane-1,2,3-tricarboxylate = 2-methyl-cis-aconitate + H2O. The protein operates within carbohydrate metabolism; tricarboxylic acid cycle; isocitrate from oxaloacetate: step 2/2. It functions in the pathway organic acid metabolism; propanoate degradation. Functionally, involved in the catabolism of short chain fatty acids (SCFA) via the tricarboxylic acid (TCA)(acetyl degradation route) and probably the 2-methylcitrate cycle I (propionate degradation route). Catalyzes the reversible isomerization of citrate to isocitrate via cis-aconitate. Could catalyze the hydration of 2-methyl-cis-aconitate to yield (2R,3S)-2-methylisocitrate. The apo form of AcnA functions as a RNA-binding regulatory protein. The protein is Aconitate hydratase A (acnA) of Pseudomonas aeruginosa (strain ATCC 15692 / DSM 22644 / CIP 104116 / JCM 14847 / LMG 12228 / 1C / PRS 101 / PAO1).